A 390-amino-acid polypeptide reads, in one-letter code: Acetylornithine aminotransferase (390 aa).

Residues 105-106 (GA) and Phe-132 contribute to the pyridoxal 5'-phosphate site. Residue Arg-135 coordinates N(2)-acetyl-L-ornithine. Residue 217–220 (DEVQ) coordinates pyridoxal 5'-phosphate. An N6-(pyridoxal phosphate)lysine modification is found at Lys-246. N(2)-acetyl-L-ornithine is bound at residue Ser-274. Thr-275 provides a ligand contact to pyridoxal 5'-phosphate.

This sequence belongs to the class-III pyridoxal-phosphate-dependent aminotransferase family. ArgD subfamily. Homodimer. Requires pyridoxal 5'-phosphate as cofactor.

The protein localises to the cytoplasm. The enzyme catalyses N(2)-acetyl-L-ornithine + 2-oxoglutarate = N-acetyl-L-glutamate 5-semialdehyde + L-glutamate. The protein operates within amino-acid biosynthesis; L-arginine biosynthesis; N(2)-acetyl-L-ornithine from L-glutamate: step 4/4. This chain is Acetylornithine aminotransferase, found in Methanothermobacter thermautotrophicus (strain ATCC 29096 / DSM 1053 / JCM 10044 / NBRC 100330 / Delta H) (Methanobacterium thermoautotrophicum).